The chain runs to 442 residues: Glutamate-1-semialdehyde 2,1-aminomutase (442 aa).

Lys-282 is subject to N6-(pyridoxal phosphate)lysine.

The protein belongs to the class-III pyridoxal-phosphate-dependent aminotransferase family. HemL subfamily. Homodimer. It depends on pyridoxal 5'-phosphate as a cofactor.

The protein resides in the cytoplasm. It catalyses the reaction (S)-4-amino-5-oxopentanoate = 5-aminolevulinate. It participates in porphyrin-containing compound metabolism; protoporphyrin-IX biosynthesis; 5-aminolevulinate from L-glutamyl-tRNA(Glu): step 2/2. This chain is Glutamate-1-semialdehyde 2,1-aminomutase, found in Polaromonas naphthalenivorans (strain CJ2).